A 356-amino-acid polypeptide reads, in one-letter code: Protein U8 (356 aa).

The protein belongs to the herpesviridae US22 family.

The polypeptide is Protein U8 (U8) (Homo sapiens (Human)).